A 240-amino-acid chain; its full sequence is Splicing factor rtf2 (240 aa).

Disordered regions lie at residues 1–22 and 181–240; these read MGND…GKVP and SLNK…RVKI. Positions 185–210 are enriched in basic residues; it reads ASKKSNKNGDKKRKHVSKSNSKHAKH. 2 stretches are compositionally biased toward basic and acidic residues: residues 211-224 and 231-240; these read ELRT…ENVK and DMERVKRVKI.

This sequence belongs to the rtf2 family. Interacts with pcn1.

The protein resides in the nucleus. In terms of biological role, putative splicing factor that is required for the correct splicing of a subset of pre-mRNAs. Required for the correct splicing of rtf1, a replication termination factor that mediates site-specific replication termination at replication barrier RTS1. The polypeptide is Splicing factor rtf2 (Schizosaccharomyces pombe (strain 972 / ATCC 24843) (Fission yeast)).